The primary structure comprises 284 residues: Phosphatidylglycerol--prolipoprotein diacylglyceryl transferase (284 aa).

7 consecutive transmembrane segments (helical) span residues isoleucine 14–isoleucine 34, tyrosine 62–tyrosine 82, phenylalanine 106–tyrosine 126, leucine 136–isoleucine 156, proline 190–alanine 210, glycine 218–tyrosine 238, and leucine 252–tyrosine 272. Arginine 155 is an a 1,2-diacyl-sn-glycero-3-phospho-(1'-sn-glycerol) binding site.

Belongs to the Lgt family.

Its subcellular location is the cell inner membrane. The catalysed reaction is L-cysteinyl-[prolipoprotein] + a 1,2-diacyl-sn-glycero-3-phospho-(1'-sn-glycerol) = an S-1,2-diacyl-sn-glyceryl-L-cysteinyl-[prolipoprotein] + sn-glycerol 1-phosphate + H(+). It functions in the pathway protein modification; lipoprotein biosynthesis (diacylglyceryl transfer). Functionally, catalyzes the transfer of the diacylglyceryl group from phosphatidylglycerol to the sulfhydryl group of the N-terminal cysteine of a prolipoprotein, the first step in the formation of mature lipoproteins. The sequence is that of Phosphatidylglycerol--prolipoprotein diacylglyceryl transferase from Helicobacter pylori (strain Shi470).